The primary structure comprises 694 residues: Elongation factor G (694 aa).

Residues 6 to 288 (KLYRNIGIAA…GVIEYLPSPT (283 aa)) form the tr-type G domain. GTP contacts are provided by residues 15 to 22 (AHVDAGKT), 86 to 90 (DTPGH), and 140 to 143 (NKMD).

The protein belongs to the TRAFAC class translation factor GTPase superfamily. Classic translation factor GTPase family. EF-G/EF-2 subfamily.

Its subcellular location is the cytoplasm. Catalyzes the GTP-dependent ribosomal translocation step during translation elongation. During this step, the ribosome changes from the pre-translocational (PRE) to the post-translocational (POST) state as the newly formed A-site-bound peptidyl-tRNA and P-site-bound deacylated tRNA move to the P and E sites, respectively. Catalyzes the coordinated movement of the two tRNA molecules, the mRNA and conformational changes in the ribosome. This is Elongation factor G from Legionella pneumophila (strain Paris).